The following is a 353-amino-acid chain: Fe(3+) ions import ATP-binding protein FbpC (353 aa).

An ABC transporter domain is found at 9–239; that stretch reads VTFENVTKKF…PASAFIADFM (231 aa). 41–48 is an ATP binding site; sequence GPSGCGKT.

This sequence belongs to the ABC transporter superfamily. Fe(3+) ion importer (TC 3.A.1.10) family. The complex is composed of two ATP-binding proteins (FbpC), two transmembrane proteins (FbpB) and a solute-binding protein (FbpA).

The protein localises to the cell inner membrane. The enzyme catalyses Fe(3+)(out) + ATP + H2O = Fe(3+)(in) + ADP + phosphate + H(+). Part of the ABC transporter complex FbpABC involved in Fe(3+) ions import. Responsible for energy coupling to the transport system. The protein is Fe(3+) ions import ATP-binding protein FbpC of Brucella suis biovar 1 (strain 1330).